A 464-amino-acid polypeptide reads, in one-letter code: Divalent metal cation transporter MntH (464 aa).

11 helical membrane-spanning segments follow: residues I57–A77, S82–A102, G125–I145, I157–M177, A186–A206, M229–G249, L281–G301, I321–S341, L376–I396, L399–V419, and V443–I463.

Belongs to the NRAMP family.

It localises to the cell membrane. In terms of biological role, h(+)-stimulated, divalent metal cation uptake system. The chain is Divalent metal cation transporter MntH from Levilactobacillus brevis (Lactobacillus brevis).